A 552-amino-acid polypeptide reads, in one-letter code: Putative transport protein YE4162 (552 aa).

The next 6 membrane-spanning stretches (helical) occupy residues 1–21, 26–46, 65–85, 96–116, 119–139, and 158–178; these read MSAI…GLWI, VYGV…VGHF, FGLI…FFSS, FAIL…KLFA, LPII…LGAA, and MGYA…MWLI. RCK C-terminal domains lie at 192-276 and 279-361; these read EFDS…VVGE and DVTL…VVGN. A run of 6 helical transmembrane segments spans residues 371–391, 393–413, 439–459, 464–484, 493–513, and 530–550; these read MLPV…PLFI, GFPA…ALIL, IVLF…NTLV, LAWI…VGIL, YLTL…LAFA, and VYPL…VLFW.

This sequence belongs to the AAE transporter (TC 2.A.81) family. YidE subfamily.

It is found in the cell membrane. In Yersinia enterocolitica serotype O:8 / biotype 1B (strain NCTC 13174 / 8081), this protein is Putative transport protein YE4162.